Reading from the N-terminus, the 423-residue chain is Polyglutamylase complex subunit TTLL1 (423 aa).

Positions 1 to 367 (MAGKVKWVTD…NGEIPDCKWN (367 aa)) constitute a TTL domain. Residues K138, 144 to 145 (QG), 181 to 184 (SLYI), and 194 to 196 (KFD) each bind ATP. Position 144 (Q144) interacts with a protein. R220 lines the L-glutamate pocket. 241–242 (TN) lines the ATP pocket. K259 lines the L-glutamate pocket. The Mg(2+) site is built by D313, E326, and N328. Position 344 (K344) interacts with L-glutamate. Positions 391 to 423 (GADRELRSRQGQSLGPRAGRSRDSGRAVLTTWK) are disordered.

It belongs to the tubulin polyglutamylase family. Part of the neuronal tubulin polyglutamylase complex which contains TPGS1, TPGS2, TTLL1, LRRC49 and NICN1. Interacts with PCM1, CSTPP1 and LRRC49. Mg(2+) is required as a cofactor. As to expression, expressed in a wide range of tissues. Has a stronger expression in heart, brain and testis.

Its subcellular location is the cytoplasm. The protein resides in the cytoskeleton. The protein localises to the cilium basal body. It is found in the cilium axoneme. It localises to the cell projection. Its subcellular location is the cilium. The protein resides in the flagellum. The catalysed reaction is (L-glutamyl)(n)-gamma-L-glutamyl-L-glutamyl-[protein] + L-glutamate + ATP = (L-glutamyl)(n+1)-gamma-L-glutamyl-L-glutamyl-[protein] + ADP + phosphate + H(+). Catalytic subunit of a polyglutamylase complex which modifies tubulin, generating side chains of glutamate on the gamma-carboxyl group of specific glutamate residues within the C-terminal tail of tubulin. Probably involved in the side-chain elongation step of the polyglutamylation reaction rather than the initiation step. Modifies both alpha- and beta-tubulins with a preference for the alpha-tail. Unlike most polyglutamylases of the tubulin--tyrosine ligase family, only displays a catalytic activity when in complex with other proteins as it is most likely lacking domains important for autonomous activity. Part of the neuronal tubulin polyglutamylase complex. Mediates cilia and flagella polyglutamylation which is essential for their biogenesis and motility. Involved in respiratory motile cilia function through the regulation of beating asymmetry. Essential for sperm flagella biogenesis, motility and male fertility. Involved in KLF4 glutamylation which impedes its ubiquitination, thereby leading to somatic cell reprogramming, pluripotency maintenance and embryogenesis. The chain is Polyglutamylase complex subunit TTLL1 from Homo sapiens (Human).